Here is a 121-residue protein sequence, read N- to C-terminus: Protein TusC (121 aa).

Belongs to the DsrF/TusC family. Heterohexamer, formed by a dimer of trimers. The hexameric TusBCD complex contains 2 copies each of TusB, TusC and TusD. The TusBCD complex interacts with TusE.

It localises to the cytoplasm. In terms of biological role, part of a sulfur-relay system required for 2-thiolation of 5-methylaminomethyl-2-thiouridine (mnm(5)s(2)U) at tRNA wobble positions. In Yersinia enterocolitica serotype O:8 / biotype 1B (strain NCTC 13174 / 8081), this protein is Protein TusC.